A 490-amino-acid chain; its full sequence is Tryptophan 5-hydroxylase 2 (490 aa).

A Phosphoserine modification is found at Ser19. Residues 31–42 (LGSSTLNKPNSG) show a composition bias toward polar residues. Residues 31 to 58 (LGSSTLNKPNSGKNDDKGNKGSSKREAA) form a disordered region. The segment covering 43–58 (KNDDKGNKGSSKREAA) has biased composition (basic and acidic residues). Residues 65 to 140 (AVVFSLKNEV…TIVTLNPPEN (76 aa)) enclose the ACT domain. Fe cation is bound by residues His318, His323, and Glu363.

It belongs to the biopterin-dependent aromatic amino acid hydroxylase family. As to quaternary structure, interacts with DNAJC12. It depends on Fe(2+) as a cofactor. As to expression, brain specific.

The catalysed reaction is (6R)-L-erythro-5,6,7,8-tetrahydrobiopterin + L-tryptophan + O2 = 5-hydroxy-L-tryptophan + (4aS,6R)-4a-hydroxy-L-erythro-5,6,7,8-tetrahydrobiopterin. It participates in aromatic compound metabolism; serotonin biosynthesis; serotonin from L-tryptophan: step 1/2. The sequence is that of Tryptophan 5-hydroxylase 2 (TPH2) from Homo sapiens (Human).